The sequence spans 316 residues: Epiphycan (316 aa).

A signal peptide spans 1 to 23 (MKTFVNIFLGFFIFESVGAVPIT). S98 is a glycosylation site (O-linked (Xyl...) (dermatan sulfate) serine). One can recognise an LRRNT domain in the interval 100 to 137 (VLVPQTQDGLPTCLLCTCLGTTVYCDDRELDAVPPLPK). Cysteines 112 and 124 form a disulfide. LRR repeat units lie at residues 138–159 (NTMY…DFAN), 162–183 (NLKR…AFRR), 186–207 (QLLE…PSTL), 232–252 (ELQH…PLPE), 253–274 (SLQA…TFCK), and 284–304 (ALED…PYAY). Residues C273 and C306 are joined by a disulfide bond. N296 carries an N-linked (GlcNAc...) asparagine glycan.

Belongs to the small leucine-rich proteoglycan (SLRP) family. SLRP class III subfamily. In terms of processing, the O-linked glycosaminoglycan chain(s) are dermatan sulfate. Preferentially expressed in flattened chondrocytes of developing chick limb cartilage. Also found in the cartilage peripheral zone bordering with bone marrow cavity.

Its subcellular location is the secreted. The protein resides in the extracellular space. It is found in the extracellular matrix. May have a role in bone formation and also in establishing the ordered structure of cartilage through matrix organization. In Gallus gallus (Chicken), this protein is Epiphycan (EPYC).